The sequence spans 739 residues: Phosphoribosylformylglycinamidine synthase subunit PurL (739 aa).

Residue histidine 54 is part of the active site. ATP contacts are provided by tyrosine 57 and lysine 96. Glutamate 98 lines the Mg(2+) pocket. Substrate contacts are provided by residues 99–102 (SHNH) and arginine 121. Catalysis depends on histidine 100, which acts as the Proton acceptor. Aspartate 122 is a binding site for Mg(2+). Glutamine 245 contacts substrate. Aspartate 273 is a Mg(2+) binding site. 317-319 (ESQ) is a substrate binding site. Positions 500 and 537 each coordinate ATP. A Mg(2+)-binding site is contributed by asparagine 538. Residue serine 540 participates in substrate binding.

Belongs to the FGAMS family. In terms of assembly, monomer. Part of the FGAM synthase complex composed of 1 PurL, 1 PurQ and 2 PurS subunits.

Its subcellular location is the cytoplasm. The enzyme catalyses N(2)-formyl-N(1)-(5-phospho-beta-D-ribosyl)glycinamide + L-glutamine + ATP + H2O = 2-formamido-N(1)-(5-O-phospho-beta-D-ribosyl)acetamidine + L-glutamate + ADP + phosphate + H(+). It functions in the pathway purine metabolism; IMP biosynthesis via de novo pathway; 5-amino-1-(5-phospho-D-ribosyl)imidazole from N(2)-formyl-N(1)-(5-phospho-D-ribosyl)glycinamide: step 1/2. Functionally, part of the phosphoribosylformylglycinamidine synthase complex involved in the purines biosynthetic pathway. Catalyzes the ATP-dependent conversion of formylglycinamide ribonucleotide (FGAR) and glutamine to yield formylglycinamidine ribonucleotide (FGAM) and glutamate. The FGAM synthase complex is composed of three subunits. PurQ produces an ammonia molecule by converting glutamine to glutamate. PurL transfers the ammonia molecule to FGAR to form FGAM in an ATP-dependent manner. PurS interacts with PurQ and PurL and is thought to assist in the transfer of the ammonia molecule from PurQ to PurL. The protein is Phosphoribosylformylglycinamidine synthase subunit PurL of Exiguobacterium sp. (strain ATCC BAA-1283 / AT1b).